The sequence spans 98 residues: Putative septation protein SpoVG (98 aa).

Belongs to the SpoVG family.

In terms of biological role, essential for sporulation. Interferes with or is a negative regulator of the pathway leading to asymmetric septation. This chain is Putative septation protein SpoVG, found in Bacillus pumilus (strain SAFR-032).